Consider the following 724-residue polypeptide: Methionine--tRNA ligase (724 aa).

The 'HIGH' region signature appears at 12 to 22 (PYVNNIPHLGN). The Zn(2+) site is built by cysteine 143, cysteine 146, cysteine 155, and cysteine 158. Residues 330-334 (KFSKS) carry the 'KMSKS' region motif. Residue lysine 333 coordinates ATP. The tRNA-binding domain occupies 560-665 (FREKVLLRVV…KNPIAGERII (106 aa)).

The protein belongs to the class-I aminoacyl-tRNA synthetase family. MetG type 1 subfamily. Homodimer. It depends on Zn(2+) as a cofactor.

The protein localises to the cytoplasm. The enzyme catalyses tRNA(Met) + L-methionine + ATP = L-methionyl-tRNA(Met) + AMP + diphosphate. Is required not only for elongation of protein synthesis but also for the initiation of all mRNA translation through initiator tRNA(fMet) aminoacylation. The sequence is that of Methionine--tRNA ligase from Borreliella afzelii (strain PKo) (Borrelia afzelii).